Reading from the N-terminus, the 247-residue chain is UDP-2,3-diacylglucosamine hydrolase (247 aa).

Positions 8, 10, 41, 79, and 114 each coordinate Mn(2+). Residue 79–80 (NR) coordinates substrate. Positions 122, 160, 171, 174, and 202 each coordinate substrate. His-202 and His-204 together coordinate Mn(2+).

This sequence belongs to the LpxH family. Mn(2+) is required as a cofactor.

The protein localises to the cell inner membrane. It carries out the reaction UDP-2-N,3-O-bis[(3R)-3-hydroxytetradecanoyl]-alpha-D-glucosamine + H2O = 2-N,3-O-bis[(3R)-3-hydroxytetradecanoyl]-alpha-D-glucosaminyl 1-phosphate + UMP + 2 H(+). It participates in glycolipid biosynthesis; lipid IV(A) biosynthesis; lipid IV(A) from (3R)-3-hydroxytetradecanoyl-[acyl-carrier-protein] and UDP-N-acetyl-alpha-D-glucosamine: step 4/6. In terms of biological role, hydrolyzes the pyrophosphate bond of UDP-2,3-diacylglucosamine to yield 2,3-diacylglucosamine 1-phosphate (lipid X) and UMP by catalyzing the attack of water at the alpha-P atom. Involved in the biosynthesis of lipid A, a phosphorylated glycolipid that anchors the lipopolysaccharide to the outer membrane of the cell. The protein is UDP-2,3-diacylglucosamine hydrolase of Xanthomonas oryzae pv. oryzae (strain MAFF 311018).